We begin with the raw amino-acid sequence, 187 residues long: ATP synthase subunit b 2 (187 aa).

A helical transmembrane segment spans residues Ser39–Pro61.

This sequence belongs to the ATPase B chain family. F-type ATPases have 2 components, F(1) - the catalytic core - and F(0) - the membrane proton channel. F(1) has five subunits: alpha(3), beta(3), gamma(1), delta(1), epsilon(1). F(0) has three main subunits: a(1), b(2) and c(10-14). The alpha and beta chains form an alternating ring which encloses part of the gamma chain. F(1) is attached to F(0) by a central stalk formed by the gamma and epsilon chains, while a peripheral stalk is formed by the delta and b chains.

The protein resides in the cell inner membrane. Its function is as follows. F(1)F(0) ATP synthase produces ATP from ADP in the presence of a proton or sodium gradient. F-type ATPases consist of two structural domains, F(1) containing the extramembraneous catalytic core and F(0) containing the membrane proton channel, linked together by a central stalk and a peripheral stalk. During catalysis, ATP synthesis in the catalytic domain of F(1) is coupled via a rotary mechanism of the central stalk subunits to proton translocation. Component of the F(0) channel, it forms part of the peripheral stalk, linking F(1) to F(0). In Parvibaculum lavamentivorans (strain DS-1 / DSM 13023 / NCIMB 13966), this protein is ATP synthase subunit b 2.